A 302-amino-acid chain; its full sequence is 33 kDa chaperonin (302 aa).

2 disulfide bridges follow: cysteine 240/cysteine 242 and cysteine 273/cysteine 276.

The protein belongs to the HSP33 family. Under oxidizing conditions two disulfide bonds are formed involving the reactive cysteines. Under reducing conditions zinc is bound to the reactive cysteines and the protein is inactive.

Its subcellular location is the cytoplasm. Functionally, redox regulated molecular chaperone. Protects both thermally unfolding and oxidatively damaged proteins from irreversible aggregation. Plays an important role in the bacterial defense system toward oxidative stress. This is 33 kDa chaperonin from Synechocystis sp. (strain ATCC 27184 / PCC 6803 / Kazusa).